The following is a 250-amino-acid chain: Small ribosomal subunit protein uS2 (250 aa).

The interval 225 to 250 (GAQGGRQARGEDLGAAVEAPSEDALA) is disordered.

This sequence belongs to the universal ribosomal protein uS2 family.

The sequence is that of Small ribosomal subunit protein uS2 from Rhizorhabdus wittichii (strain DSM 6014 / CCUG 31198 / JCM 15750 / NBRC 105917 / EY 4224 / RW1) (Sphingomonas wittichii).